The chain runs to 166 residues: Putative lipoprotein Lxx21020 (166 aa).

The first 22 residues, 1-22, serve as a signal peptide directing secretion; that stretch reads MTKTTRLLRATTVAAILLGLTG. Cys23 carries the N-palmitoyl cysteine lipid modification. Cys23 carries S-diacylglycerol cysteine lipidation.

The protein resides in the cell membrane. The chain is Putative lipoprotein Lxx21020 from Leifsonia xyli subsp. xyli (strain CTCB07).